The following is a 586-amino-acid chain: Ezrin (586 aa).

In terms of domain architecture, FERM spans 2 to 295; it reads PKPINVRVTT…GNHELYMRRR (294 aa). Lysine 60 is subject to N6-acetyllysine. A [IL]-x-C-x-x-[DE] motif motif is present at residues 115–120; it reads IYCPPE. Tyrosine 146 bears the Phosphotyrosine; by PDGFR mark. Positions 244–586 are interaction with SCYL3; sequence EIRNISFNDK…KQRIDEFEAM (343 aa). A coiled-coil region spans residues 302-462; it reads VQQMKAQARE…QDDLVKTKEE (161 aa). The tract at residues 305-340 is disordered; sequence MKAQAREEKHQKQLERQQLESEKKRREAVEQEKEQM. The span at 308 to 340 shows a compositional bias: basic and acidic residues; that stretch reads QAREEKHQKQLERQQLESEKKRREAVEQEKEQM. Tyrosine 354 carries the phosphotyrosine; by PDGFR modification. A Phosphoserine modification is found at serine 366. Tyrosine 478 carries the phosphotyrosine modification. Residue serine 535 is modified to Phosphoserine. A Phosphothreonine; by ROCK2 and PKC/PRKCI modification is found at threonine 567.

As to quaternary structure, interacts with PALS1. Found in a complex with EZR, PODXL and NHERF2. Interacts with MCC, PLEKHG6, PODXL, SCYL3/PACE1, NHERF1, NHERF2 and TMEM8B. Interacts (when phosphorylated) with FES/FPS. Interacts with dimeric S100P, the interaction may be activating through unmasking of F-actin binding sites. Identified in complexes that contain VIM, EZR, AHNAK, BFSP1, BFSP2, ANK2, PLEC, PRX and spectrin. Detected in a complex composed of at least EZR, AHNAK, PPL and PRX. Interacts with PDPN (via cytoplasmic domain); activates RHOA and promotes epithelial-mesenchymal transition. Interacts with SPN/CD43 cytoplasmic tail, CD44 and ICAM2. Interacts with SLC9A3; interaction targets SLC9A3 to the apical membrane. Interacts with SLC9A1; regulates interactions of SLC9A1 with cytoskeletal and promotes stress fiber formation. Interacts with CLIC5; may work together in a complex which also includes RDX and MYO6 to stabilize linkages between the plasma membrane and subjacent actin cytoskeleton at the base of stereocilia. Post-translationally, phosphorylated by tyrosine-protein kinases. Phosphorylation by ROCK2 suppresses the head-to-tail association of the N-terminal and C-terminal halves resulting in an opened conformation which is capable of actin and membrane-binding. In terms of processing, S-nitrosylation is induced by interferon-gamma and oxidatively-modified low-densitity lipoprotein (LDL(ox)) possibly implicating the iNOS-S100A8/9 transnitrosylase complex.

The protein resides in the apical cell membrane. It is found in the cell projection. Its subcellular location is the microvillus membrane. It localises to the ruffle membrane. The protein localises to the cytoplasm. The protein resides in the cell cortex. It is found in the cytoskeleton. Its subcellular location is the microvillus. With respect to regulation, a head-to-tail association, of the N-terminal and C-terminal halves results in a closed conformation (inactive form) which is incapable of actin or membrane-binding. Probably involved in connections of major cytoskeletal structures to the plasma membrane. In epithelial cells, required for the formation of microvilli and membrane ruffles on the apical pole. Along with PLEKHG6, required for normal macropinocytosis. This is Ezrin (EZR) from Oryctolagus cuniculus (Rabbit).